A 513-amino-acid polypeptide reads, in one-letter code: ATP synthase subunit alpha (513 aa).

169-176 (GDRQTGKT) contributes to the ATP binding site.

The protein belongs to the ATPase alpha/beta chains family. As to quaternary structure, F-type ATPases have 2 components, CF(1) - the catalytic core - and CF(0) - the membrane proton channel. CF(1) has five subunits: alpha(3), beta(3), gamma(1), delta(1), epsilon(1). CF(0) has three main subunits: a(1), b(2) and c(9-12). The alpha and beta chains form an alternating ring which encloses part of the gamma chain. CF(1) is attached to CF(0) by a central stalk formed by the gamma and epsilon chains, while a peripheral stalk is formed by the delta and b chains.

It localises to the cell inner membrane. The enzyme catalyses ATP + H2O + 4 H(+)(in) = ADP + phosphate + 5 H(+)(out). Its function is as follows. Produces ATP from ADP in the presence of a proton gradient across the membrane. The alpha chain is a regulatory subunit. In Shewanella putrefaciens (strain CN-32 / ATCC BAA-453), this protein is ATP synthase subunit alpha.